The chain runs to 165 residues: Small ribosomal subunit protein uS5 (165 aa).

In terms of domain architecture, S5 DRBM spans 10-73; sequence LVEKLVAVDR…EAARRNMITV (64 aa).

Belongs to the universal ribosomal protein uS5 family. As to quaternary structure, part of the 30S ribosomal subunit. Contacts proteins S4 and S8.

Functionally, with S4 and S12 plays an important role in translational accuracy. Its function is as follows. Located at the back of the 30S subunit body where it stabilizes the conformation of the head with respect to the body. This chain is Small ribosomal subunit protein uS5, found in Acinetobacter baumannii (strain AB307-0294).